We begin with the raw amino-acid sequence, 389 residues long: Succinate--CoA ligase [ADP-forming] subunit beta (389 aa).

In terms of domain architecture, ATP-grasp spans 9–244; that stretch reads KAVLAKYGVP…LTEEDPAEVE (236 aa). Residues Lys46, 53–55, Glu99, Ser102, and Glu107 each bind ATP; that span reads GRG. Mg(2+) contacts are provided by Asn199 and Asp213. Substrate-binding positions include Asn264 and 321-323; that span reads GIM.

It belongs to the succinate/malate CoA ligase beta subunit family. As to quaternary structure, heterotetramer of two alpha and two beta subunits. Mg(2+) serves as cofactor.

It carries out the reaction succinate + ATP + CoA = succinyl-CoA + ADP + phosphate. It catalyses the reaction GTP + succinate + CoA = succinyl-CoA + GDP + phosphate. The protein operates within carbohydrate metabolism; tricarboxylic acid cycle; succinate from succinyl-CoA (ligase route): step 1/1. Succinyl-CoA synthetase functions in the citric acid cycle (TCA), coupling the hydrolysis of succinyl-CoA to the synthesis of either ATP or GTP and thus represents the only step of substrate-level phosphorylation in the TCA. The beta subunit provides nucleotide specificity of the enzyme and binds the substrate succinate, while the binding sites for coenzyme A and phosphate are found in the alpha subunit. This chain is Succinate--CoA ligase [ADP-forming] subunit beta, found in Parvibaculum lavamentivorans (strain DS-1 / DSM 13023 / NCIMB 13966).